Here is a 339-residue protein sequence, read N- to C-terminus: Ketol-acid reductoisomerase (NADP(+)) (339 aa).

Residues 1-182 form the KARI N-terminal Rossmann domain; the sequence is MRVYYDRDAD…GGGRAGVIET (182 aa). Residues 24–27, R48, S51, T53, and 83–86 contribute to the NADP(+) site; these read YGSQ and DELQ. H108 is an active-site residue. G134 lines the NADP(+) pocket. One can recognise a KARI C-terminal knotted domain in the interval 183-328; the sequence is TFKEECETDL…EKLRAMMPWI (146 aa). Residues D191, E195, E227, and E231 each coordinate Mg(2+). S252 contacts substrate.

It belongs to the ketol-acid reductoisomerase family. The cofactor is Mg(2+).

The enzyme catalyses (2R)-2,3-dihydroxy-3-methylbutanoate + NADP(+) = (2S)-2-acetolactate + NADPH + H(+). The catalysed reaction is (2R,3R)-2,3-dihydroxy-3-methylpentanoate + NADP(+) = (S)-2-ethyl-2-hydroxy-3-oxobutanoate + NADPH + H(+). It participates in amino-acid biosynthesis; L-isoleucine biosynthesis; L-isoleucine from 2-oxobutanoate: step 2/4. Its pathway is amino-acid biosynthesis; L-valine biosynthesis; L-valine from pyruvate: step 2/4. Its function is as follows. Involved in the biosynthesis of branched-chain amino acids (BCAA). Catalyzes an alkyl-migration followed by a ketol-acid reduction of (S)-2-acetolactate (S2AL) to yield (R)-2,3-dihydroxy-isovalerate. In the isomerase reaction, S2AL is rearranged via a Mg-dependent methyl migration to produce 3-hydroxy-3-methyl-2-ketobutyrate (HMKB). In the reductase reaction, this 2-ketoacid undergoes a metal-dependent reduction by NADPH to yield (R)-2,3-dihydroxy-isovalerate. The protein is Ketol-acid reductoisomerase (NADP(+)) of Xanthobacter autotrophicus (strain ATCC BAA-1158 / Py2).